An 81-amino-acid polypeptide reads, in one-letter code: Photosystem I iron-sulfur center (81 aa).

4Fe-4S ferredoxin-type domains are found at residues 2–31 (SHSV…MIPW) and 39–68 (IASA…VRVY). Residues cysteine 11, cysteine 14, cysteine 17, cysteine 21, cysteine 48, cysteine 51, cysteine 54, and cysteine 58 each coordinate [4Fe-4S] cluster.

As to quaternary structure, the eukaryotic PSI reaction center is composed of at least 11 subunits. [4Fe-4S] cluster serves as cofactor.

The protein localises to the plastid thylakoid membrane. The catalysed reaction is reduced [plastocyanin] + hnu + oxidized [2Fe-2S]-[ferredoxin] = oxidized [plastocyanin] + reduced [2Fe-2S]-[ferredoxin]. Functionally, apoprotein for the two 4Fe-4S centers FA and FB of photosystem I (PSI); essential for photochemical activity. FB is the terminal electron acceptor of PSI, donating electrons to ferredoxin. The C-terminus interacts with PsaA/B/D and helps assemble the protein into the PSI complex. Required for binding of PsaD and PsaE to PSI. PSI is a plastocyanin-ferredoxin oxidoreductase, converting photonic excitation into a charge separation, which transfers an electron from the donor P700 chlorophyll pair to the spectroscopically characterized acceptors A0, A1, FX, FA and FB in turn. This is Photosystem I iron-sulfur center from Cuscuta obtusiflora (Peruvian dodder).